We begin with the raw amino-acid sequence, 283 residues long: 4-diphosphocytidyl-2-C-methyl-D-erythritol kinase (283 aa).

K10 is an active-site residue. 99–109 (PMGGGLGGGSS) is an ATP binding site. D141 is an active-site residue.

It belongs to the GHMP kinase family. IspE subfamily. In terms of assembly, homodimer.

It carries out the reaction 4-CDP-2-C-methyl-D-erythritol + ATP = 4-CDP-2-C-methyl-D-erythritol 2-phosphate + ADP + H(+). It participates in isoprenoid biosynthesis; isopentenyl diphosphate biosynthesis via DXP pathway; isopentenyl diphosphate from 1-deoxy-D-xylulose 5-phosphate: step 3/6. Functionally, catalyzes the phosphorylation of the position 2 hydroxy group of 4-diphosphocytidyl-2C-methyl-D-erythritol. This chain is 4-diphosphocytidyl-2-C-methyl-D-erythritol kinase, found in Citrobacter koseri (strain ATCC BAA-895 / CDC 4225-83 / SGSC4696).